Reading from the N-terminus, the 164-residue chain is ATP synthase subunit b (164 aa).

Residues 6–26 (GELVGNFILVTGSVIVLLLLI) form a helical membrane-spanning segment.

This sequence belongs to the ATPase B chain family. In terms of assembly, F-type ATPases have 2 components, F(1) - the catalytic core - and F(0) - the membrane proton channel. F(1) has five subunits: alpha(3), beta(3), gamma(1), delta(1), epsilon(1). F(0) has three main subunits: a(1), b(2) and c(10-14). The alpha and beta chains form an alternating ring which encloses part of the gamma chain. F(1) is attached to F(0) by a central stalk formed by the gamma and epsilon chains, while a peripheral stalk is formed by the delta and b chains.

It localises to the cell membrane. Functionally, f(1)F(0) ATP synthase produces ATP from ADP in the presence of a proton or sodium gradient. F-type ATPases consist of two structural domains, F(1) containing the extramembraneous catalytic core and F(0) containing the membrane proton channel, linked together by a central stalk and a peripheral stalk. During catalysis, ATP synthesis in the catalytic domain of F(1) is coupled via a rotary mechanism of the central stalk subunits to proton translocation. Component of the F(0) channel, it forms part of the peripheral stalk, linking F(1) to F(0). In Streptococcus pyogenes serotype M6 (strain ATCC BAA-946 / MGAS10394), this protein is ATP synthase subunit b.